A 340-amino-acid polypeptide reads, in one-letter code: CaiB/baiF CoA-transferase family protein ZK892.4 (340 aa).

The Nucleophile role is filled by aspartate 154.

The protein belongs to the CoA-transferase III family.

The protein is CaiB/baiF CoA-transferase family protein ZK892.4 of Caenorhabditis elegans.